Here is a 97-residue protein sequence, read N- to C-terminus: Acylphosphatase (97 aa).

An Acylphosphatase-like domain is found at 11 to 97 (TYYVRVRGTV…EKRYERFEQH (87 aa)). Catalysis depends on residues arginine 26 and asparagine 44. Positions 76 to 97 (RVTEVSGEERSTEKRYERFEQH) are disordered. Residues 82 to 97 (GEERSTEKRYERFEQH) are compositionally biased toward basic and acidic residues.

The protein belongs to the acylphosphatase family.

The catalysed reaction is an acyl phosphate + H2O = a carboxylate + phosphate + H(+). The sequence is that of Acylphosphatase (acyP) from Paraburkholderia xenovorans (strain LB400).